We begin with the raw amino-acid sequence, 357 residues long: Homoserine O-succinyltransferase (357 aa).

The Acyl-thioester intermediate role is filled by C146. 2 residues coordinate substrate: K167 and S196. H239 (proton acceptor) is an active-site residue. Residue E241 is part of the active site. R253 contacts substrate.

Belongs to the MetA family.

The protein resides in the cytoplasm. The enzyme catalyses L-homoserine + succinyl-CoA = O-succinyl-L-homoserine + CoA. Its pathway is amino-acid biosynthesis; L-methionine biosynthesis via de novo pathway; O-succinyl-L-homoserine from L-homoserine: step 1/1. In terms of biological role, transfers a succinyl group from succinyl-CoA to L-homoserine, forming succinyl-L-homoserine. The polypeptide is Homoserine O-succinyltransferase (Allochromatium vinosum (strain ATCC 17899 / DSM 180 / NBRC 103801 / NCIMB 10441 / D) (Chromatium vinosum)).